A 379-amino-acid chain; its full sequence is Type II methyltransferase M.CvrRI (379 aa).

It belongs to the N(4)/N(6)-methyltransferase family.

The catalysed reaction is a 2'-deoxyadenosine in DNA + S-adenosyl-L-methionine = an N(6)-methyl-2'-deoxyadenosine in DNA + S-adenosyl-L-homocysteine + H(+). A gamma subtype methylase, recognizes the double-stranded sequence 5'-TGCA-3', methylates A-4 on both strands, and protects the DNA from cleavage by the CviRI endonuclease. The sequence is that of Type II methyltransferase M.CvrRI (CVIRIM) from Chlorella (PBCV-XZ-6E).